The chain runs to 226 residues: UPF0173 metal-dependent hydrolase SRU_1937 (226 aa).

This sequence belongs to the UPF0173 family.

The polypeptide is UPF0173 metal-dependent hydrolase SRU_1937 (Salinibacter ruber (strain DSM 13855 / M31)).